The following is a 406-amino-acid chain: Imidazolonepropionase (406 aa).

Fe(3+)-binding residues include histidine 65 and histidine 67. Zn(2+) is bound by residues histidine 65 and histidine 67. 3 residues coordinate 4-imidazolone-5-propanoate: arginine 74, tyrosine 137, and histidine 170. Tyrosine 137 lines the N-formimidoyl-L-glutamate pocket. Histidine 235 serves as a coordination point for Fe(3+). Histidine 235 contacts Zn(2+). Glutamine 238 lines the 4-imidazolone-5-propanoate pocket. A Fe(3+)-binding site is contributed by aspartate 310. Aspartate 310 serves as a coordination point for Zn(2+). 2 residues coordinate N-formimidoyl-L-glutamate: asparagine 312 and glycine 314. Threonine 315 provides a ligand contact to 4-imidazolone-5-propanoate.

It belongs to the metallo-dependent hydrolases superfamily. HutI family. The cofactor is Zn(2+). Fe(3+) serves as cofactor.

It is found in the cytoplasm. It catalyses the reaction 4-imidazolone-5-propanoate + H2O = N-formimidoyl-L-glutamate. Its pathway is amino-acid degradation; L-histidine degradation into L-glutamate; N-formimidoyl-L-glutamate from L-histidine: step 3/3. Its function is as follows. Catalyzes the hydrolytic cleavage of the carbon-nitrogen bond in imidazolone-5-propanoate to yield N-formimidoyl-L-glutamate. It is the third step in the universal histidine degradation pathway. The polypeptide is Imidazolonepropionase (Vibrio vulnificus (strain CMCP6)).